Consider the following 340-residue polypeptide: Ferrochelatase (340 aa).

Fe cation is bound by residues His189 and Glu292.

This sequence belongs to the ferrochelatase family.

It is found in the cytoplasm. The enzyme catalyses heme b + 2 H(+) = protoporphyrin IX + Fe(2+). It participates in porphyrin-containing compound metabolism; protoheme biosynthesis; protoheme from protoporphyrin-IX: step 1/1. In terms of biological role, catalyzes the ferrous insertion into protoporphyrin IX. In Pseudomonas paraeruginosa (strain DSM 24068 / PA7) (Pseudomonas aeruginosa (strain PA7)), this protein is Ferrochelatase.